A 126-amino-acid polypeptide reads, in one-letter code: Large ribosomal subunit protein bL20 (126 aa).

Belongs to the bacterial ribosomal protein bL20 family.

Functionally, binds directly to 23S ribosomal RNA and is necessary for the in vitro assembly process of the 50S ribosomal subunit. It is not involved in the protein synthesizing functions of that subunit. In Acholeplasma laidlawii (strain PG-8A), this protein is Large ribosomal subunit protein bL20.